A 295-amino-acid polypeptide reads, in one-letter code: Structure-specific endonuclease subunit SLX1 (295 aa).

The GIY-YIG domain occupies 11 to 93 (EFYGVYILQS…QHPKTSRHMA (83 aa)). Positions 85–133 (HPKTSRHMAGGGGSVTATAETAKSAPVAGKSDATSPAKNRRNAAPVARS) are disordered. The segment at 205–272 (CCLCSDAIDY…IPSDVSCSQC (68 aa)) adopts an SLX1-type zinc-finger fold.

It belongs to the SLX1 family. In terms of assembly, forms a heterodimer with SLX4. Requires a divalent metal cation as cofactor.

Its subcellular location is the nucleus. Catalytic subunit of the SLX1-SLX4 structure-specific endonuclease that resolves DNA secondary structures generated during DNA repair and recombination. Has endonuclease activity towards branched DNA substrates, introducing single-strand cuts in duplex DNA close to junctions with ss-DNA. The polypeptide is Structure-specific endonuclease subunit SLX1 (Meyerozyma guilliermondii (strain ATCC 6260 / CBS 566 / DSM 6381 / JCM 1539 / NBRC 10279 / NRRL Y-324) (Yeast)).